A 579-amino-acid chain; its full sequence is Arginine--tRNA ligase (579 aa).

Positions 128–138 (PNLAKEMHVGH) match the 'HIGH' region motif.

Belongs to the class-I aminoacyl-tRNA synthetase family. In terms of assembly, monomer.

It localises to the cytoplasm. It carries out the reaction tRNA(Arg) + L-arginine + ATP = L-arginyl-tRNA(Arg) + AMP + diphosphate. The sequence is that of Arginine--tRNA ligase from Pseudomonas syringae pv. syringae (strain B728a).